A 260-amino-acid polypeptide reads, in one-letter code: NAD-capped RNA hydrolase NudC (260 aa).

Position 74 (Arg-74) interacts with substrate. Residues Cys-103, Cys-106, Cys-121, and Cys-124 each contribute to the Zn(2+) site. Tyr-129 contacts substrate. The 124-residue stretch at Pro-130–Thr-253 folds into the Nudix hydrolase domain. Ala-163, Glu-179, and Glu-183 together coordinate a divalent metal cation. The short motif at Gly-164–Gly-185 is the Nudix box element. Gln-197–Ser-204 lines the substrate pocket. Glu-224 contributes to the a divalent metal cation binding site. Ala-246 serves as a coordination point for substrate.

It belongs to the Nudix hydrolase family. NudC subfamily. In terms of assembly, homodimer. Requires Mg(2+) as cofactor. It depends on Mn(2+) as a cofactor. Zn(2+) serves as cofactor.

It catalyses the reaction a 5'-end NAD(+)-phospho-ribonucleoside in mRNA + H2O = a 5'-end phospho-adenosine-phospho-ribonucleoside in mRNA + beta-nicotinamide D-ribonucleotide + 2 H(+). It carries out the reaction NAD(+) + H2O = beta-nicotinamide D-ribonucleotide + AMP + 2 H(+). The enzyme catalyses NADH + H2O = reduced beta-nicotinamide D-ribonucleotide + AMP + 2 H(+). In terms of biological role, mRNA decapping enzyme that specifically removes the nicotinamide adenine dinucleotide (NAD) cap from a subset of mRNAs by hydrolyzing the diphosphate linkage to produce nicotinamide mononucleotide (NMN) and 5' monophosphate mRNA. The NAD-cap is present at the 5'-end of some mRNAs and stabilizes RNA against 5'-processing. Has preference for mRNAs with a 5'-end purine. Catalyzes the hydrolysis of a broad range of dinucleotide pyrophosphates. This Vibrio parahaemolyticus serotype O3:K6 (strain RIMD 2210633) protein is NAD-capped RNA hydrolase NudC.